A 439-amino-acid polypeptide reads, in one-letter code: Glutamine synthetase (439 aa).

The region spanning serine 12–lysine 93 is the GS beta-grasp domain. Residues proline 99–leucine 439 form the GS catalytic domain. Positions 122 and 124 each coordinate Mg(2+). ATP is bound at residue glutamate 172. Mg(2+)-binding residues include glutamate 177 and glutamate 184. Glycine 229 serves as a coordination point for L-glutamate. Histidine 233 serves as a coordination point for Mg(2+). ATP is bound by residues histidine 235–serine 237 and serine 237. Arginine 283, glutamate 289, and arginine 301 together coordinate L-glutamate. Positions 301, 306, and 313 each coordinate ATP. Mg(2+) is bound at residue glutamate 318. Residue arginine 320 coordinates L-glutamate.

The protein belongs to the glutamine synthetase family. Oligomer of 12 subunits arranged in the form of two hexagons. Mg(2+) is required as a cofactor.

The protein localises to the cytoplasm. The enzyme catalyses L-glutamate + NH4(+) + ATP = L-glutamine + ADP + phosphate + H(+). Probably involved in nitrogen metabolism via ammonium assimilation. Catalyzes the ATP-dependent biosynthesis of glutamine from glutamate and ammonia. This is Glutamine synthetase from Pyrococcus woesei.